The sequence spans 2552 residues: Probable polyketide synthase 40 (2552 aa).

The Ketosynthase family 3 (KS3) domain occupies Cys-13–Ser-443. Catalysis depends on for beta-ketoacyl synthase activity residues Cys-179, His-320, and His-362. An acyl/malonyl transferase region spans residues Gly-629–Tyr-662. The active-site For acyl/malonyl transferase activity is Ser-639. The interval Ile-928–Gln-1063 is N-terminal hotdog fold. The 308-residue stretch at Ile-928–Ser-1235 folds into the PKS/mFAS DH domain. His-962 serves as the catalytic Proton acceptor; for dehydratase activity. The C-terminal hotdog fold stretch occupies residues Asn-1087–Ser-1235. Residue Asp-1149 is the Proton donor; for dehydratase activity of the active site. Residues Asp-2467 to Ile-2546 form the Carrier domain. Ser-2505 bears the O-(pantetheine 4'-phosphoryl)serine mark.

The cofactor is pantetheine 4'-phosphate.

Functionally, probable polyketide synthase. The protein is Probable polyketide synthase 40 (pks40) of Dictyostelium discoideum (Social amoeba).